A 442-amino-acid chain; its full sequence is MENAKMNSLIAQYPLVKDLVALKETTWFNPGTTSLAEGLPYVGLTEQDVQDAHARLSRFAPYLAKAFAETAATGGIIESELVAIPAMQKRLEKEYQQPISGQLLLKKDSHLPISGSIKARGGIYEVLAHAEKLALEAGLLTLDDDYSKLLSPEFKQFFSQYSIAVGSTGNLGLSIGIMSARIGFKVTVHMSADARAWKKAKLRSHGVTVVEYEQDYGVAVEEGRKAAQSDPNCFFIDDENSRTLFLGYSVAGQRLKAQFAQQGRIVDADNPLFVYLPCGVGGGPGGVAFGLKLAFGDHVHCFFAEPTHSPCMLLGVHTGLHDQISVQDIGIDNLTAADGLAVGRASGFVGRAMERLLDGFYTLSDQTMYDMLGWLAQEEGIRLEPSALAGMAGPQRVCASVSYQQMHGFSAEQLRNTTHLVWATGGGMVPEEEMNQYLAKGR.

Lys-118 carries the N6-(pyridoxal phosphate)lysine modification.

It belongs to the serine/threonine dehydratase family. DsdA subfamily. In terms of assembly, monomer. Pyridoxal 5'-phosphate is required as a cofactor.

It carries out the reaction D-serine = pyruvate + NH4(+). The sequence is that of D-serine dehydratase from Shigella sonnei (strain Ss046).